The primary structure comprises 980 residues: Serine/threonine-protein phosphatase 4 regulatory subunit 3 (980 aa).

Positions 1-105 (MTTDTRRRVK…EKICQVQGKD (105 aa)) constitute a WH1 domain. 3 disordered regions span residues 640–668 (RDKMENRTDGGLPIIRSGGRFRRDQRQME), 695–861 (VSEK…SLCD), and 885–980 (VTAA…ARQA). Residues 695–708 (VSEKNGPQTQNQQK) are compositionally biased toward polar residues. Low complexity-rich tracts occupy residues 709–749 (SSPP…SSSP), 757–789 (QTQAAVHLAAAALQHHQQQQQQQQQNPFQQQTQ), 803–859 (EAPQ…AASL), and 885–926 (VTAA…SPAS). Residues 929-939 (QDANSTEGTSS) are compositionally biased toward polar residues. Residues 940–951 (EADKTTAKKGLV) show a composition bias toward basic and acidic residues. The segment covering 953–968 (YESDSGEDDYEEDEYS) has biased composition (acidic residues).

The protein belongs to the SMEK family. As to quaternary structure, serine/threonine-protein phosphatase 4 (PP4) occurs in different assemblies of the catalytic and one or more regulatory subunits. Probably part of a PP4 PPP4C-PPP4R2-PPP4R3 complex containing Pp4-19C, PPP4R2r and flfl. Interacts with mira. Expressed in neuroblasts.

It is found in the nucleus. It localises to the membrane. The protein resides in the cytoplasm. Regulatory subunit of serine/threonine-protein phosphatase 4. The probable PP4 complex Pp4-19C-PPP4R2r-flfl (PPP4C-PPP4R2-PPP4R3) is required to prevent caspase induced cell death (in vitro). May be involved in DNA damage repair. Key mediator specific for the localization of mira and associated cell fate determinants during both interphase and mitosis. Nuclear Flfl is required to exclude mira/pros from the nucleus when inefficiently bound to the cytoskeleton/cortex, whereas cytosolic or membrane-associated flfl is required for the cortical association and asymmetric localization of mira/pros/brat/stau at metaphase and anaphase. The polypeptide is Serine/threonine-protein phosphatase 4 regulatory subunit 3 (flfl) (Drosophila melanogaster (Fruit fly)).